The primary structure comprises 118 residues: NAD(P)H-quinone oxidoreductase subunit M (118 aa).

It belongs to the complex I NdhM subunit family. As to quaternary structure, NDH-1 can be composed of about 15 different subunits; different subcomplexes with different compositions have been identified which probably have different functions.

It localises to the cellular thylakoid membrane. It carries out the reaction a plastoquinone + NADH + (n+1) H(+)(in) = a plastoquinol + NAD(+) + n H(+)(out). It catalyses the reaction a plastoquinone + NADPH + (n+1) H(+)(in) = a plastoquinol + NADP(+) + n H(+)(out). Functionally, NDH-1 shuttles electrons from an unknown electron donor, via FMN and iron-sulfur (Fe-S) centers, to quinones in the respiratory and/or the photosynthetic chain. The immediate electron acceptor for the enzyme in this species is believed to be plastoquinone. Couples the redox reaction to proton translocation, and thus conserves the redox energy in a proton gradient. Cyanobacterial NDH-1 also plays a role in inorganic carbon-concentration. In Rippkaea orientalis (strain PCC 8801 / RF-1) (Cyanothece sp. (strain PCC 8801)), this protein is NAD(P)H-quinone oxidoreductase subunit M.